Here is a 227-residue protein sequence, read N- to C-terminus: GRF-interacting factor 1 (227 aa).

The segment covering 124-139 (ALSPLQQQQQQQAAAA) has biased composition (low complexity). 2 disordered regions span residues 124–160 (ALSP…LHGE) and 188–227 (GGGG…EEGS). The segment covering 217–227 (EYLKGTEEEGS) has biased composition (basic and acidic residues).

Belongs to the SS18 family. Interacts with GRF4. As to expression, highly expressed in internodes, nodes, developing spikelets and developing anthers. Expressed at low levels in roots and mature glumes.

The protein resides in the nucleus. It localises to the cytoplasm. Transcription coactivator that plays a role in the regulation of meristematic function in leaves, stems and inflorescences. May regulate leaf size, length of stem internodes, and seed size by promoting cell expansion. Transcription coactivator that plays a role in the regulation of grain size. Component of a network formed by the microRNA396 (miRNA396), the GRFs and their interacting factors (GIFs) acting in the regulation of meristem function, at least partially through the control of cell proliferation. Component of the miRNA396c-GRF4-GIF1 regulatory module that plays an important role in grain size determination. In Oryza sativa subsp. japonica (Rice), this protein is GRF-interacting factor 1.